The primary structure comprises 76 residues: ATP synthase peripheral stalk subunit F6, mitochondrial (76 aa).

Lysine 9, lysine 14, and lysine 47 each carry N6-acetyllysine. N6-acetyllysine; alternate occurs at positions 52 and 67. Residues lysine 52 and lysine 67 each carry the N6-succinyllysine; alternate modification. Lysine 73 is modified (N6-acetyllysine). The residue at position 76 (serine 76) is a Phosphoserine.

Belongs to the eukaryotic ATPase subunit F6 family. As to quaternary structure, component of the ATP synthase complex composed at least of ATP5F1A/subunit alpha, ATP5F1B/subunit beta, ATP5MC1/subunit c (homooctomer), MT-ATP6/subunit a, MT-ATP8/subunit 8, ATP5ME/subunit e, ATP5MF/subunit f, ATP5MG/subunit g, ATP5MK/subunit k, ATP5MJ/subunit j, ATP5F1C/subunit gamma, ATP5F1D/subunit delta, ATP5F1E/subunit epsilon, ATP5PF/subunit F6, ATP5PB/subunit b, ATP5PD/subunit d, ATP5PO/subunit OSCP. ATP synthase complex consists of a soluble F(1) head domain (subunits alpha(3) and beta(3)) - the catalytic core - and a membrane F(0) domain - the membrane proton channel (subunits c, a, 8, e, f, g, k and j). These two domains are linked by a central stalk (subunits gamma, delta, and epsilon) rotating inside the F1 region and a stationary peripheral stalk (subunits F6, b, d, and OSCP).

It localises to the mitochondrion. The protein localises to the mitochondrion inner membrane. Functionally, subunit F6, of the mitochondrial membrane ATP synthase complex (F(1)F(0) ATP synthase or Complex V) that produces ATP from ADP in the presence of a proton gradient across the membrane which is generated by electron transport complexes of the respiratory chain. ATP synthase complex consist of a soluble F(1) head domain - the catalytic core - and a membrane F(1) domain - the membrane proton channel. These two domains are linked by a central stalk rotating inside the F(1) region and a stationary peripheral stalk. During catalysis, ATP synthesis in the catalytic domain of F(1) is coupled via a rotary mechanism of the central stalk subunits to proton translocation. In vivo, can only synthesize ATP although its ATP hydrolase activity can be activated artificially in vitro. Part of the complex F(0) domain. Part of the complex F(0) domain and the peripheric stalk, which acts as a stator to hold the catalytic alpha(3)beta(3) subcomplex and subunit a/ATP6 static relative to the rotary elements. This chain is ATP synthase peripheral stalk subunit F6, mitochondrial, found in Sus scrofa (Pig).